The primary structure comprises 400 residues: Glutamyl-tRNA reductase (400 aa).

Substrate contacts are provided by residues 45 to 48 (TCNR), S103, 108 to 110 (EDQ), and Q114. C46 functions as the Nucleophile in the catalytic mechanism. 179 to 184 (GYGEIG) is an NADP(+) binding site.

Belongs to the glutamyl-tRNA reductase family. In terms of assembly, homodimer.

The enzyme catalyses (S)-4-amino-5-oxopentanoate + tRNA(Glu) + NADP(+) = L-glutamyl-tRNA(Glu) + NADPH + H(+). The protein operates within porphyrin-containing compound metabolism; protoporphyrin-IX biosynthesis; 5-aminolevulinate from L-glutamyl-tRNA(Glu): step 1/2. Functionally, catalyzes the NADPH-dependent reduction of glutamyl-tRNA(Glu) to glutamate 1-semialdehyde (GSA). The sequence is that of Glutamyl-tRNA reductase from Clostridium perfringens (strain SM101 / Type A).